The primary structure comprises 188 residues: dTTP/UTP pyrophosphatase (188 aa).

Catalysis depends on Asp-70, which acts as the Proton acceptor.

The protein belongs to the Maf family. YhdE subfamily. The cofactor is a divalent metal cation.

It localises to the cytoplasm. The catalysed reaction is dTTP + H2O = dTMP + diphosphate + H(+). It catalyses the reaction UTP + H2O = UMP + diphosphate + H(+). In terms of biological role, nucleoside triphosphate pyrophosphatase that hydrolyzes dTTP and UTP. May have a dual role in cell division arrest and in preventing the incorporation of modified nucleotides into cellular nucleic acids. This Clostridium botulinum (strain Alaska E43 / Type E3) protein is dTTP/UTP pyrophosphatase.